The following is a 282-amino-acid chain: Cell division protein DivIB (282 aa).

Residues 1–59 (MLDDRSAIEHHKYSQRLTELERRSAAAQQRQQKKKPPKMHVGNKIRGIKIKRYVSNGER) are Cytoplasmic-facing. The disordered stretch occupies residues 19 to 41 (ELERRSAAAQQRQQKKKPPKMHV). Over residues 31–41 (QQKKKPPKMHV) the composition is skewed to basic residues. Residues 60–80 (VLKLVVLFSAILLFMLYIISP) form a helical membrane-spanning segment. Residues 81-282 (LSKITTLHVT…YSYDYGSKDK (202 aa)) lie on the Extracellular side of the membrane. The POTRA domain maps to 82 to 153 (SKITTLHVTG…QSLQISVKEN (72 aa)).

This sequence belongs to the FtsQ/DivIB family. DivIB subfamily.

It is found in the cell membrane. Its function is as follows. Cell division protein that may be involved in stabilizing or promoting the assembly of the division complex. The sequence is that of Cell division protein DivIB from Limosilactobacillus reuteri (strain ATCC 55730 / SD2112) (Lactobacillus reuteri).